A 506-amino-acid chain; its full sequence is Maturase K (506 aa).

It belongs to the intron maturase 2 family. MatK subfamily.

It localises to the plastid. The protein resides in the chloroplast. Functionally, usually encoded in the trnK tRNA gene intron. Probably assists in splicing its own and other chloroplast group II introns. The sequence is that of Maturase K from Atractylodes lancea (Atractylodes japonica).